The following is a 277-amino-acid chain: MALKTFNPTTPGQRQLVMVDRSALYKGKPVKALTEGKRGKGGRNNTGRITVRFRGGGHKQAYRNVDFKRGKEDVPAIVERLEYDPNRTAFIALIKYQDGEQAYILAPQRLAVGDTVVAGNYVDVKPGNVMPLGNMPVGTIVHNVEMKIGKGGQLARSAGTYAQIVGRDHDYVILRLNSGEQRLVHGRCRGAIGAVSNPDHMNTSIGKAGRTRWMGRRPHNRGVVMNPIDHPHGGGEGRTSGGRHPVTPWGKPTKGKKTRSNKSTNKFILISRHKRKK.

Residues 223–277 (VVMNPIDHPHGGGEGRTSGGRHPVTPWGKPTKGKKTRSNKSTNKFILISRHKRKK) form a disordered region.

The protein belongs to the universal ribosomal protein uL2 family. Part of the 50S ribosomal subunit. Forms a bridge to the 30S subunit in the 70S ribosome.

Functionally, one of the primary rRNA binding proteins. Required for association of the 30S and 50S subunits to form the 70S ribosome, for tRNA binding and peptide bond formation. It has been suggested to have peptidyltransferase activity; this is somewhat controversial. Makes several contacts with the 16S rRNA in the 70S ribosome. The chain is Large ribosomal subunit protein uL2 from Nitrobacter hamburgensis (strain DSM 10229 / NCIMB 13809 / X14).